We begin with the raw amino-acid sequence, 765 residues long: Phosphoribosylformylglycinamidine synthase subunit PurL (765 aa).

Residue histidine 41 is part of the active site. Residues tyrosine 44 and lysine 83 each contribute to the ATP site. Glutamate 85 provides a ligand contact to Mg(2+). Substrate contacts are provided by residues 86–89 and arginine 108; that span reads SHNH. Histidine 87 acts as the Proton acceptor in catalysis. Residue aspartate 109 coordinates Mg(2+). Glutamine 232 serves as a coordination point for substrate. Aspartate 260 provides a ligand contact to Mg(2+). 304–306 is a substrate binding site; it reads ESQ. Positions 503 and 540 each coordinate ATP. A Mg(2+)-binding site is contributed by asparagine 541. Serine 543 provides a ligand contact to substrate.

Belongs to the FGAMS family. Monomer. Part of the FGAM synthase complex composed of 1 PurL, 1 PurQ and 2 PurS subunits.

The protein resides in the cytoplasm. The enzyme catalyses N(2)-formyl-N(1)-(5-phospho-beta-D-ribosyl)glycinamide + L-glutamine + ATP + H2O = 2-formamido-N(1)-(5-O-phospho-beta-D-ribosyl)acetamidine + L-glutamate + ADP + phosphate + H(+). It participates in purine metabolism; IMP biosynthesis via de novo pathway; 5-amino-1-(5-phospho-D-ribosyl)imidazole from N(2)-formyl-N(1)-(5-phospho-D-ribosyl)glycinamide: step 1/2. Functionally, part of the phosphoribosylformylglycinamidine synthase complex involved in the purines biosynthetic pathway. Catalyzes the ATP-dependent conversion of formylglycinamide ribonucleotide (FGAR) and glutamine to yield formylglycinamidine ribonucleotide (FGAM) and glutamate. The FGAM synthase complex is composed of three subunits. PurQ produces an ammonia molecule by converting glutamine to glutamate. PurL transfers the ammonia molecule to FGAR to form FGAM in an ATP-dependent manner. PurS interacts with PurQ and PurL and is thought to assist in the transfer of the ammonia molecule from PurQ to PurL. In Synechococcus sp. (strain WH7803), this protein is Phosphoribosylformylglycinamidine synthase subunit PurL.